A 191-amino-acid chain; its full sequence is Adenylate cyclase CyaB (191 aa).

The CYTH domain occupies 9 to 180 (RFEVEFKYRL…TRSYRTLCEQ (172 aa)). Tyr46 acts as the Proton acceptor in catalysis.

This sequence belongs to the adenylyl cyclase CyaB family.

The protein localises to the cytoplasm. The catalysed reaction is ATP = 3',5'-cyclic AMP + diphosphate. With respect to regulation, inhibited by GTP. In vitro, CyaB catalyzes the biosynthesis of cyclic AMP (cAMP) from ATP. It seems that under the physiological conditions CyaB has no function in cAMP processes. In vitro, it is also able to hydrolyze substrates such as thiamine triphosphate (ThTP) and inorganic triphosphate (PPPi) at a low rate. It has a slight preference for ThTP over ATP and PPPi in the presence of manganese ions. This PPPase activity is probably not of physiological importance. The polypeptide is Adenylate cyclase CyaB (cyaB) (Aeromonas hydrophila).